Consider the following 140-residue polypeptide: Organic hydroperoxide resistance protein-like (140 aa).

Belongs to the OsmC/Ohr family.

The protein is Organic hydroperoxide resistance protein-like of Mycoplasma genitalium (strain ATCC 33530 / DSM 19775 / NCTC 10195 / G37) (Mycoplasmoides genitalium).